A 339-amino-acid chain; its full sequence is MSNRKLFTPWSLKGVTLKNRIVMSPMCMYSSHEKDGKVQPFHMTHYISRAVGQVGLIMVEATAVTPQGRISDQDLGIWDDAHIDGLAALTSQIKTYGSKTAIQLAHAGRKAEVEGTIYGPSAIPFDENSRTPVEMTKEDIKETVQAFKKGAERAKAAGFDIIEIHGAHGYLINEFLSPLSNKREDEYGGSPENRYRLLREVIDAVKEVWAGPLFVRVSASDYKTKGLDVADYVGFAKWMKEQGVDLIDVSSGAVVPADINVFPGYQVGFADTIRAQAEIQTGAVGLITSGLQAEEILQNGRADLIFVARELLRDPYWPKTAAKQLNTKIEGPVQYDRAW.

24 to 27 (SPMC) is a binding site for FMN. Tyr-29 contacts substrate. Residues Ala-61 and Gln-103 each contribute to the FMN site. Residue 165–168 (HGAH) participates in substrate binding. Residues Arg-216 and 308–309 (AR) each bind FMN.

The protein belongs to the NADH:flavin oxidoreductase/NADH oxidase family. NamA subfamily. In terms of assembly, homotetramer. FMN serves as cofactor.

It carries out the reaction A + NADPH + H(+) = AH2 + NADP(+). Catalyzes the reduction of the double bond of an array of alpha,beta-unsaturated aldehydes and ketones. It also reduces the nitro group of nitroester and nitroaromatic compounds. It could have a role in detoxification processes. The protein is NADPH dehydrogenase of Bacillus licheniformis (strain ATCC 14580 / DSM 13 / JCM 2505 / CCUG 7422 / NBRC 12200 / NCIMB 9375 / NCTC 10341 / NRRL NRS-1264 / Gibson 46).